Consider the following 97-residue polypeptide: Large ribosomal subunit protein uL23 (97 aa).

This sequence belongs to the universal ribosomal protein uL23 family. In terms of assembly, part of the 50S ribosomal subunit. Contacts protein L29, and trigger factor when it is bound to the ribosome.

One of the early assembly proteins it binds 23S rRNA. One of the proteins that surrounds the polypeptide exit tunnel on the outside of the ribosome. Forms the main docking site for trigger factor binding to the ribosome. The protein is Large ribosomal subunit protein uL23 of Acidithiobacillus ferrooxidans (strain ATCC 23270 / DSM 14882 / CIP 104768 / NCIMB 8455) (Ferrobacillus ferrooxidans (strain ATCC 23270)).